A 510-amino-acid chain; its full sequence is Facilitated glucose transporter protein 1 (510 aa).

Positions 1–29 are disordered; sequence MSEKSRSDTSATASLSDSSKSPSSYSTPG. Residues 1 to 46 lie on the Cytoplasmic side of the membrane; the sequence is MSEKSRSDTSATASLSDSSKSPSSYSTPGTTTQKIIFPDGKLTKCL. Positions 8–29 are enriched in low complexity; the sequence is DTSATASLSDSSKSPSSYSTPG. The chain crosses the membrane as a helical span at residues 47–67; the sequence is AFSAFVITLASFQFGYHIGCV. Over 68–100 the chain is Extracellular; sequence NAPGGLITEWIIGSHKDLFDKELSRENADLAWS. Residues 101–121 form a helical membrane-spanning segment; it reads VAVSVFAVGGMIGGLSSGWLA. Over 122 to 127 the chain is Cytoplasmic; that stretch reads DKVGRR. The chain crosses the membrane as a helical span at residues 128–146; it reads GALFYNNLLALAAAALMGL. Over 147-160 the chain is Extracellular; the sequence is AKSVGAYPMVILGR. A helical transmembrane segment spans residues 161–181; it reads LIIGLNCGFSSALVPMFLTEI. Residues 182-195 lie on the Cytoplasmic side of the membrane; that stretch reads SPNNLRGMLGSLHQ. Position 195 (Gln195) interacts with D-glucose. The chain crosses the membrane as a helical span at residues 196–216; the sequence is LLVTIAILVSQIFGLPHLLGT. The Extracellular segment spans residues 217-219; that stretch reads GDR. Residues 220 to 240 form a helical membrane-spanning segment; the sequence is WPLIFAFTVVPAVLQLALLML. Topologically, residues 241–299 are cytoplasmic; it reads CPESPKYTMAVRGQRNEAESALKKLRDTEDVSTEIEAMQEEATAAGVQEKPKMGDMFKG. The chain crosses the membrane as a helical span at residues 300–320; it reads ALLWPMSIAIMMMLAQQLSGI. Residues 315–316, Asn321, and Asn352 each bind D-glucose; that span reads QQ. The Extracellular segment spans residues 321–341; that stretch reads NVAMFYSTVIFRGAGLTGNEP. Residues 342–362 traverse the membrane as a helical segment; the sequence is FYATIGMGAVNVIMTLISVWL. The Cytoplasmic segment spans residues 363-373; sequence VDHPKFGRRSL. Residues 374 to 394 traverse the membrane as a helical segment; it reads LLAGLTGMFVSTLLLVGALTI. Over 395-409 the chain is Extracellular; that stretch reads QNSGGDKWASYSAIG. A helical membrane pass occupies residues 410 to 430; it reads FVLLFVISFATGPGAIPWFFV. Trp427 is a binding site for D-glucose. The Cytoplasmic segment spans residues 431-445; it reads SEIFDSSARGNANSI. Residues 446–464 form a helical membrane-spanning segment; the sequence is AVMVNWAANLLVGLTFLPI. The Extracellular portion of the chain corresponds to 465–470; the sequence is NNLMQQ. Residues 471–491 form a helical membrane-spanning segment; sequence YSFFIFSGFLAFFIFYTWKFV. The Cytoplasmic portion of the chain corresponds to 492–510; it reads PETKGKSIEQIQAEFEKRK.

Belongs to the major facilitator superfamily. Sugar transporter (TC 2.A.1.1) family. Glucose transporter subfamily. Isoform a is expressed in pharyngeal muscle and intestinal cells in both embryos and adults (at protein level).

The protein localises to the cell membrane. The protein resides in the basolateral cell membrane. Facilitative glucose transporter that plays a role in glucose metabolism and regulation of longevity. May also play a role in lipid metabolism. Glucose transport activity of isoform a is competitively inhibited by mannose, galactose and fructose, suggesting ability to transport also other hexose sugars. In Caenorhabditis elegans, this protein is Facilitated glucose transporter protein 1.